A 579-amino-acid chain; its full sequence is 2-isopropylmalate synthase (579 aa).

The Pyruvate carboxyltransferase domain occupies 40–314; it reads PRWCAVDLRD…DPMIDFSDID (275 aa). The Mg(2+) site is built by aspartate 49, histidine 253, histidine 255, and asparagine 289. The segment at 456–579 is regulatory domain; it reads SGKADGQWGR…VNRAIRDAQS (124 aa).

This sequence belongs to the alpha-IPM synthase/homocitrate synthase family. LeuA type 2 subfamily. As to quaternary structure, homodimer. It depends on Mg(2+) as a cofactor.

It is found in the cytoplasm. It catalyses the reaction 3-methyl-2-oxobutanoate + acetyl-CoA + H2O = (2S)-2-isopropylmalate + CoA + H(+). It participates in amino-acid biosynthesis; L-leucine biosynthesis; L-leucine from 3-methyl-2-oxobutanoate: step 1/4. Its function is as follows. Catalyzes the condensation of the acetyl group of acetyl-CoA with 3-methyl-2-oxobutanoate (2-ketoisovalerate) to form 3-carboxy-3-hydroxy-4-methylpentanoate (2-isopropylmalate). This is 2-isopropylmalate synthase from Pseudarthrobacter chlorophenolicus (strain ATCC 700700 / DSM 12829 / CIP 107037 / JCM 12360 / KCTC 9906 / NCIMB 13794 / A6) (Arthrobacter chlorophenolicus).